A 204-amino-acid polypeptide reads, in one-letter code: Tat proofreading chaperone DmsD (204 aa).

Belongs to the TorD/DmsD family. DmsD subfamily. Monomer in solution.

Its function is as follows. Required for biogenesis/assembly of DMSO reductase, but not for the interaction of the DmsA signal peptide with the Tat system. May be part of a chaperone cascade complex that facilitates a folding-maturation pathway for the substrate protein. In Salmonella typhimurium (strain LT2 / SGSC1412 / ATCC 700720), this protein is Tat proofreading chaperone DmsD.